A 522-amino-acid chain; its full sequence is Stellatic acid synthase (522 aa).

Residues 23-43 form a helical membrane-spanning segment; sequence IYGIYEPLLALFAVYSVAVVV. Residues Asn-267 and Asn-451 are each glycosylated (N-linked (GlcNAc...) asparagine). Cys-464 is a heme binding site. Asn-495 carries an N-linked (GlcNAc...) asparagine glycan.

This sequence belongs to the cytochrome P450 family. It depends on heme as a cofactor.

The protein localises to the membrane. It catalyses the reaction stellata-2,6,19-triene + 3 reduced [NADPH--hemoprotein reductase] + 3 O2 = stellatate + 3 oxidized [NADPH--hemoprotein reductase] + 4 H2O + 4 H(+). It functions in the pathway secondary metabolite biosynthesis; terpenoid biosynthesis. Functionally, cytochrome P450 monooxygenase; part of the gene cluster that mediates the biosynthesis of the sesterterpene stellatic acid. The first step in the pathway is performed by the stellatatriene synthase that possesses both prenyl transferase and terpene cyclase activity, converting isopentenyl diphosphate and dimethylallyl diphosphate into geranylgeranyl diphosphate (GGDP) and then converting GGDP into stellata-2,6,19-triene. The cytochrome P450 monooxygenase Stl-P450 then catalyzes three successive oxidation reactions on the C-20 methyl group to generate the carboxylic acid of stellatic acid. The sequence is that of Stellatic acid synthase from Emericella variicolor (Aspergillus stellatus).